The sequence spans 150 residues: Snake venom vascular endothelial growth factor toxin barietin (150 aa).

The first 24 residues, 1–24, serve as a signal peptide directing secretion; that stretch reads MAAYLLAVAILFCIQGWPSGTVQG. Pyrrolidone carboxylic acid (Glu) is present on Glu25. Intrachain disulfides connect Cys38-Cys80, Cys69-Cys115, and Cys73-Cys117. The segment at 119–150 is disordered; sequence PRSGSRVNIGKHKRSPEEGEREPSSPLTPGSL. A propeptide spanning residues 122–150 is cleaved from the precursor; it reads GSRVNIGKHKRSPEEGEREPSSPLTPGSL.

The protein belongs to the PDGF/VEGF growth factor family. Snake venom VEGF subfamily. Homodimer; disulfide-linked. Interacts with high affinity with VEGF receptor-2 (KDR), and with a lower affinity with VEGF receptor-1 (FLT1). Does not bind VEGF receptor-3 (FLT4) and neuropilin-1 (NRP1). As to expression, expressed by the venom gland.

Its subcellular location is the secreted. Snake venom VEGFs that may contribute to venom dispersion and prey subjugation by inducing vascular permeability and hypotension. This protein induces an increase in capillary permeability after intradermal injection, as well as a drastic hypotensive effect after intravenous injection. The hypotension is mediated by nitric oxide (NO), which is produced by VEGF-activated endothelium NO synthase. Also induces angiogenesis in vitro, probably through VEGF receptor (KDR/VEGFR-2) signaling. The protein is Snake venom vascular endothelial growth factor toxin barietin of Bitis arietans (African puff adder).